Consider the following 250-residue polypeptide: MHITANSLFRDTIHFLRSKWPIIVTFVLLSSTITVVIDSIITPNARSLLAFYQLDIKKYHSLLDFVRTLTIDQQKLLLYASIAKSFSLLIGSTFLLGNLITFIQMTSYKKNITLSIFNNIPYKTFFKLLQLIFTTTIITQLGFLLYFIPGFTTIILFSLSPIILLIEEKTILNSIYASINITLSNFKIIVPAIIFWLCFKIFIILIISYFKFFSDFLAYFILNLCINFISSILIIYLFRCYMILPKFLKN.

6 helical membrane-spanning segments follow: residues 21–41 (PIIVTFVLLSSTITVVIDSII), 86–106 (FSLLIGSTFLLGNLITFIQMT), 125–145 (FFKLLQLIFTTTIITQLGFLL), 146–166 (YFIPGFTTIILFSLSPIILLI), 188–208 (IIVPAIIFWLCFKIFIILIIS), and 216–236 (FLAYFILNLCINFISSILIIY).

Belongs to the UPF0259 family.

The protein localises to the cell membrane. This is UPF0259 membrane protein bbp_256 from Buchnera aphidicola subsp. Baizongia pistaciae (strain Bp).